We begin with the raw amino-acid sequence, 593 residues long: High affinity cGMP-specific 3',5'-cyclic phosphodiesterase 9A (593 aa).

Residues 87 to 141 form a disordered region; that stretch reads SAGVEDKRTTSRGQSAERPLRDRRVVGLEQPRREGAFESGQVEPRPREPQGCYQE. The span at 104–122 shows a compositional bias: basic and acidic residues; that stretch reads RPLRDRRVVGLEQPRREGA. The PDEase domain occupies 236 to 557; it reads PRRDVPTYPK…DRYEELKRID (322 aa). His-312 (proton donor) is an active-site residue. 312–316 provides a ligand contact to 3',5'-cyclic GMP; sequence HNFRH. Zn(2+) contacts are provided by His-316, His-352, and Asp-353. A 3',5'-cyclic GMP-binding site is contributed by Asp-353. A Mg(2+)-binding site is contributed by Asp-353. The residue at position 379 (Ser-379) is a Phosphoserine. 3',5'-cyclic GMP is bound by residues Asp-462, Tyr-484, and 512 to 513; that span reads AQ. Asp-462 is a binding site for Zn(2+). The interval 564-593 is disordered; that stretch reads QKKTDSLTSGATEKSRERSRDVKNSEGDCA. Residues 576 to 593 show a composition bias toward basic and acidic residues; it reads EKSRERSRDVKNSEGDCA.

This sequence belongs to the cyclic nucleotide phosphodiesterase family. PDE9 subfamily. In terms of assembly, homodimer. Requires Zn(2+) as cofactor. The cofactor is Mg(2+). Expressed in all tissues examined (testis, brain, small intestine, skeletal muscle, heart, lung, thymus, spleen, placenta, kidney, liver, pancreas, ovary and prostate) except blood. Highest levels in brain, heart, kidney, spleen, prostate and colon. Isoform PDE9A12 is found in prostate. In brain, present in the cortex, cerebellum, and subiculum (at protein level). In heart, primarily localizes to myocytes.

The protein resides in the cell projection. The protein localises to the ruffle membrane. Its subcellular location is the cytoplasm. It is found in the perinuclear region. It localises to the golgi apparatus. The protein resides in the endoplasmic reticulum. The protein localises to the cell membrane. Its subcellular location is the sarcolemma. The enzyme catalyses 3',5'-cyclic GMP + H2O = GMP + H(+). It participates in purine metabolism; 3',5'-cyclic GMP degradation; GMP from 3',5'-cyclic GMP: step 1/1. With respect to regulation, inhibited by zaprinast; inhibitor is however not specific to PDE9A. Specifically inhibited by BAY-73-6691 (1-(2-chlorophenyl)-6-((2R)-3,3,3- trifluoro-2-methylpropyl)-1,5-dihydro-4H-pyrazolo(3,4-d)pyrimidine-4-one). BAY-73-9961 has two enantiomers, (R) and (S), due to the presence of a chiral center, and both forms vary in their pattern of interaction. Specifically inhibited by PF-4181366 (4H-Pyrazolo[3,4-d]pyrimidin-4-one, 1- cyclopentyl-1,5-dihydro-6-[(3S,4S)-4-methyl- 1-(6-quinoxalinylmethyl)-3-pyrrolidinyl]-one). Specifically inhibited by PF-4449613 ((R)-6-(1-(3-phenoxyazetidin-1-yl)ethyl)-1-(tetrahydro-2H-pyran-4-yl)-1H-pyrazolo[3,4-d]pyrimidin- 4(5H)-one). Specifically inhibited by inhibitor 28 (2-((1-(2-Chlorophenyl)-4-hydroxy-1Hpyrazolo[ 3,4-d]pyrimidin-6-yl)amino)-N-(4- methoxyphenyl)propanamide): inhibitor forms a hydrogen bond with Tyr-484 and Gln-513. Specifically inhibited by 1-Cyclopentyl-6-[(1r)-1-(3-phenoxyazetidin- 1-Yl)ethyl]-1,5-dihydro-4h-pyrazolo[3,4-D] pyrimidin-4-one: inhibitor forms a hydrogen bond with Tyr-484 and Gln-513. Specifically hydrolyzes the second messenger cGMP, which is a key regulator of many important physiological processes. Highly specific: compared to other members of the cyclic nucleotide phosphodiesterase family, has the highest affinity and selectivity for cGMP. Specifically regulates natriuretic-peptide-dependent cGMP signaling in heart, acting as a regulator of cardiac hypertrophy in myocytes and muscle. Does not regulate nitric oxide-dependent cGMP in heart. Additional experiments are required to confirm whether its ability to hydrolyze natriuretic-peptide-dependent cGMP is specific to heart or is a general feature of the protein. In brain, involved in cognitive function, such as learning and long-term memory. The protein is High affinity cGMP-specific 3',5'-cyclic phosphodiesterase 9A of Homo sapiens (Human).